The primary structure comprises 108 residues: MQVLHLCLAVSIAVALLSQAAWSEEVFDDTDVGDELTNALESVLTDFKDKREAEEPSAFMTRLRRQVAQMHVWRAVNHDRNHGTGSGRHGRFLIRNRYRYGGGHLSDA.

Residues 1 to 23 form the signal peptide; that stretch reads MQVLHLCLAVSIAVALLSQAAWS. Pyrrolidone carboxylic acid (Glu); partial is present on residues Glu24 and Glu52. A Pyrrolidone carboxylic acid modification is found at Gln66.

Post-translationally, the partial formation of pyroglutamate from N-terminal glutamic acid in peptides isolated from single cells is detected by mass spectrometry. There are indications this modification depends on a heat sensitive factor. Neurons R3-R14. A cluster of 12 giant neurons located on the right side of the abdominal ganglion.

It localises to the secreted. HRBP is a myoactive peptide that excites Aplysia heart and enhances gut motility in vitro. In Aplysia californica (California sea hare), this protein is Abdominal ganglion neuropeptide R3-14.